A 78-amino-acid polypeptide reads, in one-letter code: Translational regulator CsrA (78 aa).

Belongs to the CsrA/RsmA family. As to quaternary structure, homodimer; the beta-strands of each monomer intercalate to form a hydrophobic core, while the alpha-helices form wings that extend away from the core.

The protein resides in the cytoplasm. In terms of biological role, a translational regulator that binds mRNA to regulate translation initiation and/or mRNA stability. Usually binds in the 5'-UTR at or near the Shine-Dalgarno sequence preventing ribosome-binding, thus repressing translation. Its main target seems to be the major flagellin gene, while its function is anatagonized by FliW. This is Translational regulator CsrA from Borrelia recurrentis (strain A1).